Here is a 589-residue protein sequence, read N- to C-terminus: BTB/POZ domain and ankyrin repeat-containing protein NPR3 (589 aa).

The disordered stretch occupies residues 1–25 (METSTISFSSSSPPSPPPPQPAPGD). Positions 13-22 (PPSPPPPQPA) are enriched in pro residues. One can recognise a BTB domain in the interval 52–137 (AEIVLASGGG…LYTGRLRSAP (86 aa)). A C2HC NPR-type zinc finger spans residues 140–154 (AAACLDDGCSHDACR). Residues C143, C148, H150, and C153 each contribute to the Zn(2+) site. ANK repeat units follow at residues 260-290 (KRVR…TLDD), 292-319 (FAIH…NVNL), and 323-352 (SGYT…SVLE). The tract at residues 382-521 (ERSKAYLCIG…LDKFLNEEST (140 aa)) is salicylic acid-binding core (SBC). Position 433 (R433) interacts with salicylate. Positions 555–589 (DKAAGAAISSSTSASSSPRYETKLRPGNKKGKLSR) are disordered. Positions 558–571 (AGAAISSSTSASSS) are enriched in low complexity. Over residues 580-589 (PGNKKGKLSR) the composition is skewed to basic residues.

This sequence belongs to the plant 'ANKYRIN-BTB/POZ' family. 'NPR1-like' subfamily. Interacts with TGA2.1, TGA2.2, TGA2.3, LG2, TGAL1, TGAL4, NRR, RH1, RH2 and RH3.

The protein localises to the nucleus. The protein operates within protein modification; protein ubiquitination. Salicylic acid (SA)-binding substrate-specific adapter of an E3 ubiquitin-protein ligase complex (CUL3-RBX1-BTB) which mediates the ubiquitination and subsequent proteasomal degradation of target proteins. Involved in defense response against the bacterial blight disease caused by Xanthomonas oryzae pv. oryzae (Xoo). Plants expressing an NPR3/NH3 transgene driven by its native promoter show enhanced resistance to the Xoo pathogen, and exhibit elevated sensitivity to benzothiadiazole (BTH) treatment and enhanced induction of defense-related genes upon treatment with BTH. Intriguingly, constitutive over-expression of NPR3/NH3 with a ubiquitin promoter does not confer disease resistance to Xoo. This is BTB/POZ domain and ankyrin repeat-containing protein NPR3 from Oryza sativa subsp. japonica (Rice).